A 413-amino-acid chain; its full sequence is Probable protein phosphatase 2C 78 (413 aa).

The segment at 21–40 is disordered; that stretch reads KKATTTTRRRERSSSQAARR. The region spanning 111–409 is the PPM-type phosphatase domain; it reads KYGVASVCGR…DNVSVVVVDL (299 aa). The Mn(2+) site is built by D153, G154, D327, and D400.

This sequence belongs to the PP2C family. Requires Mg(2+) as cofactor. Mn(2+) is required as a cofactor.

The protein localises to the golgi apparatus. It is found in the nucleus. The enzyme catalyses O-phospho-L-seryl-[protein] + H2O = L-seryl-[protein] + phosphate. The catalysed reaction is O-phospho-L-threonyl-[protein] + H2O = L-threonyl-[protein] + phosphate. Functionally, acts as a negative regulator of abscisic acid (ABA) signaling for stomatal closure in leaves, and controls water loss during leaf senescence. Activated by the NAC029/NAP transcription factor during ABA signaling in senescing leaves. Functions as a negative regulator of osmotic stress and ABA signaling. Acts as a negative regulator of response to drought. This chain is Probable protein phosphatase 2C 78, found in Arabidopsis thaliana (Mouse-ear cress).